Reading from the N-terminus, the 323-residue chain is MAVPPVEMYSGSFWNRMRKPLPLRTQVIRFTVVFVIVSFILVVALQITHERMPDPKVTKPLPDLGFELLTKVPGMYVLADCCIGFLNILSVFTAFKLYLLHRHCVGSGEPELPCNIPGVSRFFLSVWLCKENCRIELRNIHTIAWIRFITSYALLLLSRSIIMVVTSLPNPDDLCQNPPKIENRVKDILLTVLTAGAGSIHCGDLMYSGHTVILTLHLMFHWIYGAMVHWSFRPVVTVVAIFGYYCIVASRFHYTDDVLVAIYLTIATFIAVGHNADGAPWQLQLFIRWWPCCGANSREVAEDGVPVAIVIKNEEMMNFEGKS.

Topologically, residues methionine 1–glutamine 26 are cytoplasmic. A helical membrane pass occupies residues valine 27 to isoleucine 47. The Extracellular portion of the chain corresponds to threonine 48–glycine 74. A helical membrane pass occupies residues methionine 75–phenylalanine 95. Over lysine 96–arginine 147 the chain is Cytoplasmic. A helical membrane pass occupies residues phenylalanine 148–leucine 168. The Extracellular segment spans residues proline 169–aspartate 187. The helical transmembrane segment at isoleucine 188–serine 208 threads the bilayer. Topologically, residues glycine 209–arginine 233 are cytoplasmic. The chain crosses the membrane as a helical span at residues proline 234–tyrosine 254. Residues threonine 255–aspartate 257 are Extracellular-facing. The chain crosses the membrane as a helical span at residues valine 258–glycine 278. The Cytoplasmic portion of the chain corresponds to alanine 279–serine 323.

This sequence belongs to the sphingomyelin synthase family.

It is found in the membrane. It catalyses the reaction an N-acylsphing-4-enine + a 1,2-diacyl-sn-glycero-3-phosphoethanolamine = an N-acylsphing-4-enine 1-phosphoethanolamine + a 1,2-diacyl-sn-glycerol. The enzyme catalyses an N-acylsphinganine + a 1,2-diacyl-sn-glycero-3-phosphoethanolamine = an N-acylsphinganine-1-phosphoethanolamine + a 1,2-diacyl-sn-glycerol. Functionally, predominantly synthesizes ethanolamine-phosphorylceramide (EPC), with minimal sphingomyelin (SM)/inositol phosphorylceramide (IPC) synthase activity. Specificity is likely to be defined by residues in the lumenal catalytic domain that interact with the polar head groups of the phospholipid donors. EPC is synthesized by both stages of the parasite life cycle, bloodstream forms (BSF) and procyclic forms (PCF), by transferring the phosphoethanolamine from a 1,2-diacyl-sn-glycero-3-phosphoethanolamine to an N-acylsphing-4-enine (ceramide) or an N-acylsphinganine (dihydroceramide). Similarly, SM is synthesized by transferring the phosphocholine from a 1,2-diacyl-sn-glycero-3-phosphocholine to ceramide or dihydroceramide by BSF and PCF, while IPC is confined to PCF. The ceramide/dihydroceramide ratios are skewed towards dihydroceramide in PCF parasites and ceramide in BSF parasites, this is likely due to differential expression and/or regulation of dihydroceramide desaturase, the enzyme responsible for converting dihydroceramide to ceramide. The chain is Phosphatidylethanolamine:ceramide ethanolaminephosphotransferase from Trypanosoma brucei brucei.